The primary structure comprises 85 residues: UPF0297 protein LGAS_0422 (85 aa).

Belongs to the UPF0297 family.

The chain is UPF0297 protein LGAS_0422 from Lactobacillus gasseri (strain ATCC 33323 / DSM 20243 / BCRC 14619 / CIP 102991 / JCM 1131 / KCTC 3163 / NCIMB 11718 / NCTC 13722 / AM63).